Consider the following 674-residue polypeptide: Methionine--tRNA ligase (674 aa).

A 'HIGH' region motif is present at residues proline 11–histidine 21. 4 residues coordinate Zn(2+): cysteine 142, cysteine 145, cysteine 155, and cysteine 158. The 'KMSKS' region motif lies at lysine 330–serine 334. ATP is bound at residue lysine 333. The tRNA-binding domain occupies aspartate 574–lysine 674.

The protein belongs to the class-I aminoacyl-tRNA synthetase family. MetG type 1 subfamily. Homodimer. Requires Zn(2+) as cofactor.

Its subcellular location is the cytoplasm. The catalysed reaction is tRNA(Met) + L-methionine + ATP = L-methionyl-tRNA(Met) + AMP + diphosphate. In terms of biological role, is required not only for elongation of protein synthesis but also for the initiation of all mRNA translation through initiator tRNA(fMet) aminoacylation. The protein is Methionine--tRNA ligase of Francisella tularensis subsp. tularensis (strain FSC 198).